A 1088-amino-acid chain; its full sequence is Serine/threonine-protein kinase 11-interacting protein (1088 aa).

8 LRR repeats span residues 109–130, 132–152, 164–185, 187–209, 210–231, 233–254, 255–276, and 280–301; these read SLRHLELRGVPLHCLHGLRGIY, QLETLICSRSLQALEELLSAC, ALLSANFSYNALTALDSSLRLL, ALRFLNLSHNQVQDCQGFLMDLC, ELHHLDISYNRLHLVPRMGPSG, ALGVLILRGNELRSLHGLEQLR, NLRHLDLAYNLLEGHRELSPLW, and ELRKLYLEGNPLWFHPEHRAAT. Disordered stretches follow at residues 335–407 and 437–533; these read GLSP…SPAG and LEPS…QKEV. Residues 346-367 are compositionally biased toward low complexity; that stretch reads PVGSTPETSGGPDLSDSLSSGG. Residues 375-385 show a composition bias toward basic residues; the sequence is HKVKSRVRVRR. Serine 387, serine 389, and serine 392 each carry phosphoserine. The segment covering 447 to 460 has biased composition (low complexity); that stretch reads TPTTSAPSAPPASS. A Phosphoserine modification is found at serine 470. Acidic residues predominate over residues 508–529; the sequence is EEGEMVEQGEEEAGEEEEEEQD. The residue at position 599 (serine 599) is a Phosphoserine. 2 disordered regions span residues 724-780 and 978-1009; these read TPNR…SPPP and DAAGSPAEPSPPAASGEASEKVPPSGPGPAVR. The span at 733-742 shows a compositional bias: polar residues; that stretch reads EQSLAPSPSA. Basic and acidic residues predominate over residues 750–759; that stretch reads GHGDHLDRAK. Serine 761, serine 773, and serine 777 each carry phosphoserine. The segment covering 978 to 994 has biased composition (low complexity); the sequence is DAAGSPAEPSPPAASGE.

The protein belongs to the STK11IP family. Found in a ternary complex composed of STK11/LKB1, STK11IP and SMAD4. Interacts with STK11/LKB1 and SMAD4.

It is found in the cytoplasm. May regulate STK11/LKB1 function by controlling its subcellular localization. In Homo sapiens (Human), this protein is Serine/threonine-protein kinase 11-interacting protein (STK11IP).